A 206-amino-acid polypeptide reads, in one-letter code: Large ribosomal subunit protein uL4 (206 aa).

The tract at residues 60 to 84 (TAKPFKQKGTGHARQGSKRSPQFRG) is disordered. Basic residues predominate over residues 64-76 (FKQKGTGHARQGS).

This sequence belongs to the universal ribosomal protein uL4 family. As to quaternary structure, part of the 50S ribosomal subunit.

Its function is as follows. One of the primary rRNA binding proteins, this protein initially binds near the 5'-end of the 23S rRNA. It is important during the early stages of 50S assembly. It makes multiple contacts with different domains of the 23S rRNA in the assembled 50S subunit and ribosome. In terms of biological role, forms part of the polypeptide exit tunnel. This chain is Large ribosomal subunit protein uL4, found in Rhodospirillum rubrum (strain ATCC 11170 / ATH 1.1.1 / DSM 467 / LMG 4362 / NCIMB 8255 / S1).